A 561-amino-acid chain; its full sequence is Inner membrane ABC transporter ATP-binding protein YddA (561 aa).

Topologically, residues 1–3 (MIT) are cytoplasmic. A helical transmembrane segment spans residues 4–24 (IPITLRMLIAKYLCLLKPFWL). At 25–31 (RKNNKTS) the chain is on the periplasmic side. A helical transmembrane segment spans residues 32 to 52 (VLLIIIILAMILGVVKIQVWL). The 303-residue stretch at 35–337 (IIIILAMILG…FIYKYDELAE (303 aa)) folds into the ABC transmembrane type-1 domain. Over 53–70 (NDWNNDFFNALSQKETDK) the chain is Cytoplasmic. Residues 71 to 91 (LWQLVLWFPALLGIFVLISVN) form a helical membrane-spanning segment. At 92 to 151 (KTWLIKLLTIRWREWLTDYYLNRWFADKNYYFTQIYGEHKNTDNPDQRIAEDILLLISKT) the chain is on the periplasmic side. Residues 152–172 (LSLSFGFIQSLSMLITFTVIL) traverse the membrane as a helical segment. Topologically, residues 173-187 (WESAGTLSFTVGGTE) are cytoplasmic. Residues 188–208 (WNIQGYMVYTVVLIVIGGTLF) form a helical membrane-spanning segment. Residues 209-290 (THKVGKRIRP…WQNIYSRSLS (82 aa)) lie on the Periplasmic side of the membrane. The helical transmembrane segment at 291 to 311 (VLPYFLLLPQFISGQINLGGL) threads the bilayer. Residues 312-561 (MKSRQAFMLV…DDICDISAVL (250 aa)) lie on the Cytoplasmic side of the membrane. An ABC transporter domain is found at 367-561 (VQVADASIRT…DDICDISAVL (195 aa)). Position 400-407 (400-407 (GYSGAGKT)) interacts with ATP.

Belongs to the ABC transporter superfamily.

The protein resides in the cell inner membrane. In Escherichia coli (strain K12), this protein is Inner membrane ABC transporter ATP-binding protein YddA (yddA).